Here is a 122-residue protein sequence, read N- to C-terminus: Prefoldin subunit 1 (122 aa).

Position 2 is an N-acetylalanine (Ala-2).

The protein belongs to the prefoldin subunit beta family. In terms of assembly, heterohexamer of two PFD-alpha type and four PFD-beta type subunits.

Binds specifically to cytosolic chaperonin (c-CPN) and transfers target proteins to it. Binds to nascent polypeptide chain and promotes folding in an environment in which there are many competing pathways for nonnative proteins. The chain is Prefoldin subunit 1 (PFDN1) from Bos taurus (Bovine).